The following is an 85-amino-acid chain: Large ribosomal subunit protein bL31B (85 aa).

Belongs to the bacterial ribosomal protein bL31 family. Type B subfamily. Part of the 50S ribosomal subunit.

The sequence is that of Large ribosomal subunit protein bL31B from Pseudomonas entomophila (strain L48).